We begin with the raw amino-acid sequence, 316 residues long: Homoserine kinase (316 aa).

97–107 (PHSRGLGSSAA) lines the ATP pocket.

Belongs to the GHMP kinase family. Homoserine kinase subfamily.

It is found in the cytoplasm. It catalyses the reaction L-homoserine + ATP = O-phospho-L-homoserine + ADP + H(+). Its pathway is amino-acid biosynthesis; L-threonine biosynthesis; L-threonine from L-aspartate: step 4/5. Catalyzes the ATP-dependent phosphorylation of L-homoserine to L-homoserine phosphate. This is Homoserine kinase from Mycobacterium tuberculosis (strain ATCC 25618 / H37Rv).